The sequence spans 323 residues: Methionyl-tRNA formyltransferase (323 aa).

(6S)-5,6,7,8-tetrahydrofolate is bound at residue 115–118; the sequence is SLLP.

Belongs to the Fmt family.

The catalysed reaction is L-methionyl-tRNA(fMet) + (6R)-10-formyltetrahydrofolate = N-formyl-L-methionyl-tRNA(fMet) + (6S)-5,6,7,8-tetrahydrofolate + H(+). In terms of biological role, attaches a formyl group to the free amino group of methionyl-tRNA(fMet). The formyl group appears to play a dual role in the initiator identity of N-formylmethionyl-tRNA by promoting its recognition by IF2 and preventing the misappropriation of this tRNA by the elongation apparatus. This is Methionyl-tRNA formyltransferase from Lactococcus lactis subsp. cremoris (strain MG1363).